Consider the following 1081-residue polypeptide: DNA primase (1081 aa).

Residues 484 to 497 are compositionally biased toward polar residues; that stretch reads SPNKPQSVHSTPPL. The interval 484-508 is disordered; sequence SPNKPQSVHSTPPLDQSRGDELSPG. The CHC2-type zinc finger occupies 1024–1064; the sequence is CLRAKHLRSARGLARTFLSISADVHGRLCASISQQCFATKC.

Belongs to the herpesviridae DNA primase family. In terms of assembly, associates with the helicase and the primase-associated factor to form the helicase-primase factor.

It is found in the host nucleus. In terms of biological role, essential component of the helicase/primase complex. Unwinds the DNA at the replication forks and generates single-stranded DNA for both leading and lagging strand synthesis. The primase initiates primer synthesis and thereby produces large amount of short RNA primers on the lagging strand that the polymerase elongates using dNTPs. The protein is DNA primase of Equus caballus (Horse).